The chain runs to 593 residues: Tectonic-1 (593 aa).

A signal peptide spans 1–22 (MGSRGLPPLLLVLLNCYTSSST). The segment at 37–72 (KEDLNSTKATPTTLQPSLSPRTPGTPRAPERSGPRP) is disordered. The N-linked (GlcNAc...) asparagine glycan is linked to Asn41. Polar residues predominate over residues 42–58 (STKATPTTLQPSLSPRT). The N-linked (GlcNAc...) asparagine glycan is linked to Asn303. Arg486 carries the omega-N-methylarginine modification. Residue Asn536 is glycosylated (N-linked (GlcNAc...) asparagine).

The protein belongs to the tectonic family. As to quaternary structure, part of the tectonic-like complex (also named B9 complex).

It localises to the cytoplasm. The protein localises to the cytoskeleton. The protein resides in the cilium basal body. Its subcellular location is the secreted. Its function is as follows. Component of the tectonic-like complex, a complex localized at the transition zone of primary cilia and acting as a barrier that prevents diffusion of transmembrane proteins between the cilia and plasma membranes. Regulator of Hedgehog (Hh), required for both activation and inhibition of the Hh pathway in the patterning of the neural tube. During neural tube development, it is required for formation of the most ventral cell types and for full Hh pathway activation. Functions in Hh signal transduction to fully activate the pathway in the presence of high Hh levels and to repress the pathway in the absence of Hh signals. Modulates Hh signal transduction downstream of SMO and RAB23. The protein is Tectonic-1 (Tctn1) of Mus musculus (Mouse).